We begin with the raw amino-acid sequence, 31 residues long: Cyclotide vico-B (31 aa).

Residues 1–31 (GSIPCAESCVYIPCITGIAGCSCKNKVCYYN) constitute a cross-link (cyclopeptide (Gly-Asn)). 3 disulfide bridges follow: cysteine 5–cysteine 21, cysteine 9–cysteine 23, and cysteine 14–cysteine 28.

Belongs to the cyclotide family. Bracelet subfamily. Post-translationally, this is a cyclic peptide.

Its function is as follows. Probably participates in a plant defense mechanism. In Viola cotyledon (Violeta), this protein is Cyclotide vico-B.